The sequence spans 53 residues: Conotoxin Cal9.2e (53 aa).

Positions 1–6 (KKGVTQ) are excised as a propeptide. 3 cysteine pairs are disulfide-bonded: C15–C32, C20–C42, and C22–C47.

As to expression, expressed by the venom duct.

The protein localises to the secreted. Its function is as follows. Probable neurotoxin with unknown target. Possibly targets ion channels. This Californiconus californicus (California cone) protein is Conotoxin Cal9.2e.